The following is a 301-amino-acid chain: Type II restriction enzyme BslI subunit beta (301 aa).

The CHC2-type zinc-finger motif lies at 62–82 (CPDGHTKWNQNLTKEMTCSEC).

Heterotetramer of two alpha and two beta subunits. The alpha subunit is believed to be responsible for DNA recognition, while the beta subunit is thought to mediate cleavage. The cofactor is Zn(2+).

The enzyme catalyses Endonucleolytic cleavage of DNA to give specific double-stranded fragments with terminal 5'-phosphates.. In terms of biological role, a P subtype restriction enzyme that recognizes the double-stranded sequence 5'-CCN(7)GG-3' and cleaves after N-7. This Bacillus sp. (strain NEB-606) protein is Type II restriction enzyme BslI subunit beta.